A 184-amino-acid polypeptide reads, in one-letter code: UPF0398 protein BCG9842_B3730 (184 aa).

The protein belongs to the UPF0398 family.

This chain is UPF0398 protein BCG9842_B3730, found in Bacillus cereus (strain G9842).